The sequence spans 465 residues: Mitochondrial distribution and morphology protein 10 (465 aa).

Belongs to the MDM10 family. As to quaternary structure, component of the ER-mitochondria encounter structure (ERMES) or MDM complex, composed of MMM1, MDM10, MDM12 and MDM34. Associates with the mitochondrial outer membrane sorting assembly machinery SAM(core) complex.

The protein localises to the mitochondrion outer membrane. Its function is as follows. Component of the ERMES/MDM complex, which serves as a molecular tether to connect the endoplasmic reticulum and mitochondria. Components of this complex are involved in the control of mitochondrial shape and protein biogenesis and may function in phospholipid exchange. MDM10 is involved in the late assembly steps of the general translocase of the mitochondrial outer membrane (TOM complex). Functions in the TOM40-specific route of the assembly of outer membrane beta-barrel proteins, including the association of TOM40 with the receptor TOM22 and small TOM proteins. Can associate with the SAM(core) complex as well as the MDM12-MMM1 complex, both involved in late steps of the major beta-barrel assembly pathway, that is responsible for biogenesis of all outer membrane beta-barrel proteins. May act as a switch that shuttles between both complexes and channels precursor proteins into the TOM40-specific pathway. Plays a role in mitochondrial morphology and in the inheritance of mitochondria. The protein is Mitochondrial distribution and morphology protein 10 of Eremothecium gossypii (strain ATCC 10895 / CBS 109.51 / FGSC 9923 / NRRL Y-1056) (Yeast).